Here is a 641-residue protein sequence, read N- to C-terminus: Chaperone protein DnaK (641 aa).

Threonine 199 carries the phosphothreonine; by autocatalysis modification. Residues 602–641 (MYADQADQAQQAGGQEEGQAKSADDAVDAEFEEVKDDDKK) are disordered. A compositionally biased stretch (low complexity) spans 604 to 615 (ADQADQAQQAGG). Residues 626-641 (DAVDAEFEEVKDDDKK) show a composition bias toward acidic residues.

It belongs to the heat shock protein 70 family.

Its function is as follows. Acts as a chaperone. The sequence is that of Chaperone protein DnaK from Marinobacter nauticus (strain ATCC 700491 / DSM 11845 / VT8) (Marinobacter aquaeolei).